The sequence spans 914 residues: Isoleucine--tRNA ligase (914 aa).

A 'HIGH' region motif is present at residues 64–74 (PYANGNFHLGH). E557 is an L-isoleucyl-5'-AMP binding site. The 'KMSKS' region signature appears at 598–602 (AMSKS). K601 is a binding site for ATP. C889, C892, C906, and C909 together coordinate Zn(2+).

The protein belongs to the class-I aminoacyl-tRNA synthetase family. IleS type 1 subfamily. Monomer. It depends on Zn(2+) as a cofactor.

The protein resides in the cytoplasm. The catalysed reaction is tRNA(Ile) + L-isoleucine + ATP = L-isoleucyl-tRNA(Ile) + AMP + diphosphate. Functionally, catalyzes the attachment of isoleucine to tRNA(Ile). As IleRS can inadvertently accommodate and process structurally similar amino acids such as valine, to avoid such errors it has two additional distinct tRNA(Ile)-dependent editing activities. One activity is designated as 'pretransfer' editing and involves the hydrolysis of activated Val-AMP. The other activity is designated 'posttransfer' editing and involves deacylation of mischarged Val-tRNA(Ile). This is Isoleucine--tRNA ligase from Leptospira borgpetersenii serovar Hardjo-bovis (strain JB197).